Reading from the N-terminus, the 173-residue chain is VQ motif-containing protein 31 (173 aa).

A VQ motif is present at residues 27–36 (FREIVQRLTG). A Phosphothreonine modification is found at Thr46. 2 disordered regions span residues 76-105 (EIVK…TSPV) and 143-173 (LHPS…SGKP). Over residues 86 to 105 (PTGTTPSSKSGNTNLLTSPV) the composition is skewed to polar residues. Phosphoserine occurs at positions 92, 103, 146, and 149. The segment covering 154-165 (TEPELLTLFPLT) has biased composition (low complexity). Thr165 carries the post-translational modification Phosphothreonine. Phosphoserine occurs at positions 166 and 170.

In terms of processing, phosphorylated on serine and threonine residues by MPK6.

The protein localises to the nucleus. In terms of biological role, may modulate WRKY transcription factor activities. This chain is VQ motif-containing protein 31, found in Arabidopsis thaliana (Mouse-ear cress).